The sequence spans 551 residues: Formate--tetrahydrofolate ligase (551 aa).

Residue 65-72 participates in ATP binding; that stretch reads TPAGEGKT.

This sequence belongs to the formate--tetrahydrofolate ligase family.

It catalyses the reaction (6S)-5,6,7,8-tetrahydrofolate + formate + ATP = (6R)-10-formyltetrahydrofolate + ADP + phosphate. The protein operates within one-carbon metabolism; tetrahydrofolate interconversion. In Thermosipho melanesiensis (strain DSM 12029 / CIP 104789 / BI429), this protein is Formate--tetrahydrofolate ligase.